The primary structure comprises 208 residues: Protein-L-isoaspartate O-methyltransferase (208 aa).

Ser59 is an active-site residue.

The protein belongs to the methyltransferase superfamily. L-isoaspartyl/D-aspartyl protein methyltransferase family.

It is found in the cytoplasm. The enzyme catalyses [protein]-L-isoaspartate + S-adenosyl-L-methionine = [protein]-L-isoaspartate alpha-methyl ester + S-adenosyl-L-homocysteine. In terms of biological role, catalyzes the methyl esterification of L-isoaspartyl residues in peptides and proteins that result from spontaneous decomposition of normal L-aspartyl and L-asparaginyl residues. It plays a role in the repair and/or degradation of damaged proteins. The chain is Protein-L-isoaspartate O-methyltransferase from Aliivibrio salmonicida (strain LFI1238) (Vibrio salmonicida (strain LFI1238)).